The sequence spans 252 residues: Cytochrome b6-f complex iron-sulfur subunit, chloroplastic (252 aa).

A helical membrane pass occupies residues L94–F114. Residues W141–L235 enclose the Rieske domain. The [2Fe-2S] cluster site is built by C181, H183, C199, and H202. C186 and C201 are disulfide-bonded.

The protein belongs to the Rieske iron-sulfur protein family. The 4 large subunits of the cytochrome b6-f complex are cytochrome b6, subunit IV (17 kDa polypeptide, petD), cytochrome f and the Rieske protein, while the 4 small subunits are petG, petL, petM and petN. The complex functions as a dimer. It depends on [2Fe-2S] cluster as a cofactor.

The protein resides in the plastid. It is found in the chloroplast thylakoid membrane. The catalysed reaction is 2 oxidized [plastocyanin] + a plastoquinol + 2 H(+)(in) = 2 reduced [plastocyanin] + a plastoquinone + 4 H(+)(out). In terms of biological role, component of the cytochrome b6-f complex, which mediates electron transfer between photosystem II (PSII) and photosystem I (PSI), cyclic electron flow around PSI, and state transitions. This chain is Cytochrome b6-f complex iron-sulfur subunit, chloroplastic (petC), found in Bigelowiella natans (Pedinomonas minutissima).